A 351-amino-acid chain; its full sequence is Polycomb group RING finger protein 6 (351 aa).

Residues 1–114 are disordered; it reads MEEAETDATE…FSLRLESGRA (114 aa). Basic and acidic residues predominate over residues 9 to 19; sequence TENKRASEAKR. Over residues 24–37 the composition is skewed to pro residues; sequence LPPPPPPISPPALI. Residue Ser32 is modified to Phosphoserine. The span at 38–51 shows a compositional bias: low complexity; that stretch reads PAPAAGEEGPASLA. Residues 62–80 show a composition bias toward basic and acidic residues; sequence RPPELEPERSLGRLRGRFE. A coiled-coil region spans residues 69 to 110; that stretch reads ERSLGRLRGRFEDYDEELEEDEEMEEEEEEEEEMSHFSLRLE. The span at 81–101 shows a compositional bias: acidic residues; sequence DYDEELEEDEEMEEEEEEEEE. Ser116 bears the Phosphoserine mark. Residues 135–174 form an RING-type zinc finger; that stretch reads CSICKGYLIDATTITECLHTFCKSCIVRHFYYSNRCPKCN. Residues Lys224 and Lys235 each participate in a glycyl lysine isopeptide (Lys-Gly) (interchain with G-Cter in SUMO2) cross-link.

In terms of assembly, component of a PRC1-like complex. Interacts with BMI1/PCGF4, RING1 and RNF2. Interacts with KDM5D. Interacts with CBX4, CBX6, CBX7 and CBX8. In terms of processing, phosphorylated during mitosis.

The protein localises to the nucleus. Transcriptional repressor. May modulate the levels of histone H3K4Me3 by activating KDM5D histone demethylase. Component of a Polycomb group (PcG) multiprotein PRC1-like complex, a complex class required to maintain the transcriptionally repressive state of many genes, including Hox genes, throughout development. PcG PRC1 complex acts via chromatin remodeling and modification of histones; it mediates monoubiquitination of histone H2A 'Lys-119', rendering chromatin heritably changed in its expressibility. Within the PRC1-like complex, regulates RNF2 ubiquitin ligase activity. In Rattus norvegicus (Rat), this protein is Polycomb group RING finger protein 6 (Pcgf6).